Here is a 430-residue protein sequence, read N- to C-terminus: NADH-quinone oxidoreductase subunit D 1 (430 aa).

The disordered stretch occupies residues 1–36 (MSEAKGVGGIDPRATPGSAGAGERPPMGTVSRAGDG).

The protein belongs to the complex I 49 kDa subunit family. In terms of assembly, NDH-1 is composed of 14 different subunits. Subunits NuoB, C, D, E, F, and G constitute the peripheral sector of the complex.

The protein localises to the cell inner membrane. The catalysed reaction is a quinone + NADH + 5 H(+)(in) = a quinol + NAD(+) + 4 H(+)(out). Its function is as follows. NDH-1 shuttles electrons from NADH, via FMN and iron-sulfur (Fe-S) centers, to quinones in the respiratory chain. The immediate electron acceptor for the enzyme in this species is believed to be ubiquinone. Couples the redox reaction to proton translocation (for every two electrons transferred, four hydrogen ions are translocated across the cytoplasmic membrane), and thus conserves the redox energy in a proton gradient. This is NADH-quinone oxidoreductase subunit D 1 from Anaeromyxobacter dehalogenans (strain 2CP-C).